The chain runs to 463 residues: Chaperone SurA (463 aa).

A signal peptide spans 1–25 (MTKPFSVVLASLLAITSTISPLASA). 2 PpiC domains span residues 174–276 (GSKY…KLME) and 289–388 (VTEY…QRVG). Disordered stretches follow at residues 329–348 (ATAK…GDLG) and 434–463 (GDRA…KPTR). Positions 439-452 (NNATAAPAKSADPA) are enriched in low complexity. Residues 453–463 (LPAPPPAKPTR) show a composition bias toward pro residues.

It is found in the periplasm. It carries out the reaction [protein]-peptidylproline (omega=180) = [protein]-peptidylproline (omega=0). Its function is as follows. Chaperone involved in the correct folding and assembly of outer membrane proteins. Recognizes specific patterns of aromatic residues and the orientation of their side chains, which are found more frequently in integral outer membrane proteins. May act in both early periplasmic and late outer membrane-associated steps of protein maturation. The polypeptide is Chaperone SurA (Xanthomonas oryzae pv. oryzae (strain MAFF 311018)).